The primary structure comprises 141 residues: Galactose-6-phosphate isomerase subunit LacA (141 aa).

The protein belongs to the LacAB/RpiB family. Heteromultimeric protein consisting of LacA and LacB.

The catalysed reaction is aldehydo-D-galactose 6-phosphate = keto-D-tagatose 6-phosphate. It participates in carbohydrate metabolism; D-galactose 6-phosphate degradation; D-tagatose 6-phosphate from D-galactose 6-phosphate: step 1/1. The polypeptide is Galactose-6-phosphate isomerase subunit LacA (Streptococcus equi subsp. zooepidemicus (strain MGCS10565)).